A 183-amino-acid chain; its full sequence is Translocon-associated protein subunit beta (183 aa).

The first 17 residues, 1-17, serve as a signal peptide directing secretion; it reads MRLLSFVVLALFAVTQA. Topologically, residues 18–149 are lumenal; the sequence is EEGARLLASK…DRRFSPHFLD (132 aa). N-linked (GlcNAc...) asparagine glycans are attached at residues N88 and N104. Residues 150 to 169 form a helical membrane-spanning segment; sequence WAAFGVMTLPSIGIPLLLWY. Topologically, residues 170–183 are cytoplasmic; the sequence is SSKRKYDTPKTKKN.

The protein belongs to the TRAP-beta family. As to quaternary structure, heterotetramer of TRAP-alpha, TRAP-beta, TRAP-delta and TRAP-gamma. Interacts with STING1.

It is found in the endoplasmic reticulum membrane. Functionally, TRAP proteins are part of a complex whose function is to bind calcium to the ER membrane and thereby regulate the retention of ER resident proteins. The polypeptide is Translocon-associated protein subunit beta (SSR2) (Homo sapiens (Human)).